A 103-amino-acid chain; its full sequence is Phospholipase A2 large subunit (103 aa).

Ca(2+) is bound by residues W7, G9, and G11. Disulfide bonds link C8–C30, C29–C68, C36–C61, and C59–C96. N-linked (GlcNAc...) asparagine glycosylation is present at N16. Residue H33 is part of the active site. Residue D34 participates in Ca(2+) binding.

The protein belongs to the phospholipase A2 family. Group III subfamily. As to quaternary structure, heterodimer composed of a large subunit and a small subunit; disulfide-linked. It depends on Ca(2+) as a cofactor. Expressed by the venom gland.

It is found in the secreted. The enzyme catalyses a 1,2-diacyl-sn-glycero-3-phosphocholine + H2O = a 1-acyl-sn-glycero-3-phosphocholine + a fatty acid + H(+). Phospholipase toxin, which catalyzes the calcium-dependent hydrolysis of the 2-acyl groups in 3-sn-phosphoglycerides. Inhibits both skeletal (RYR1) and cardiac (RYR2) ryanodine receptors (calcium release channels). Probably blocks ryanodine receptors by generating a lipid product. In Chersonesometrus fulvipes (Indian black scorpion), this protein is Phospholipase A2 large subunit.